Reading from the N-terminus, the 184-residue chain is NADH-quinone oxidoreductase subunit B (184 aa).

[4Fe-4S] cluster-binding residues include C37, C38, C103, and C132.

The protein belongs to the complex I 20 kDa subunit family. In terms of assembly, NDH-1 is composed of 14 different subunits. Subunits NuoB, C, D, E, F, and G constitute the peripheral sector of the complex. Requires [4Fe-4S] cluster as cofactor.

It is found in the cell membrane. It carries out the reaction a quinone + NADH + 5 H(+)(in) = a quinol + NAD(+) + 4 H(+)(out). Its function is as follows. NDH-1 shuttles electrons from NADH, via FMN and iron-sulfur (Fe-S) centers, to quinones in the respiratory chain. The immediate electron acceptor for the enzyme in this species is believed to be a menaquinone. Couples the redox reaction to proton translocation (for every two electrons transferred, four hydrogen ions are translocated across the cytoplasmic membrane), and thus conserves the redox energy in a proton gradient. In Rhodococcus jostii (strain RHA1), this protein is NADH-quinone oxidoreductase subunit B.